Reading from the N-terminus, the 39-residue chain is Photosystem II reaction center protein L (39 aa).

Residues 18–38 traverse the membrane as a helical segment; the sequence is SLYLGLLVVFTTGILFSSYFF.

The protein belongs to the PsbL family. PSII is composed of 1 copy each of membrane proteins PsbA, PsbB, PsbC, PsbD, PsbE, PsbF, PsbH, PsbI, PsbJ, PsbK, PsbL, PsbM, PsbT, PsbX, PsbY, PsbZ, Psb30/Ycf12, peripheral proteins PsbO, CyanoQ (PsbQ), PsbU, PsbV and a large number of cofactors. It forms dimeric complexes.

The protein resides in the cellular thylakoid membrane. One of the components of the core complex of photosystem II (PSII). PSII is a light-driven water:plastoquinone oxidoreductase that uses light energy to abstract electrons from H(2)O, generating O(2) and a proton gradient subsequently used for ATP formation. It consists of a core antenna complex that captures photons, and an electron transfer chain that converts photonic excitation into a charge separation. This subunit is found at the monomer-monomer interface and is required for correct PSII assembly and/or dimerization. The protein is Photosystem II reaction center protein L of Synechococcus sp. (strain WH7803).